The sequence spans 396 residues: Endo-1,4-beta-xylanase A (396 aa).

The first 28 residues, 1 to 28, serve as a signal peptide directing secretion; sequence MITLFRKPFVAGLAISLLVGGGIGNVAA. The 346-residue stretch at 51–396 folds into the GH10 domain; it reads AWQVASLSER…VKPAYWRIID (346 aa). Glutamate 195 functions as the Proton donor in the catalytic mechanism. The active-site Nucleophile is glutamate 301.

The protein belongs to the glycosyl hydrolase 10 (cellulase F) family.

It localises to the secreted. The enzyme catalyses Endohydrolysis of (1-&gt;4)-beta-D-xylosidic linkages in xylans.. Its pathway is glycan degradation; xylan degradation. This is Endo-1,4-beta-xylanase A (xynA) from Halalkalibacterium halodurans (strain ATCC BAA-125 / DSM 18197 / FERM 7344 / JCM 9153 / C-125) (Bacillus halodurans).